Here is a 268-residue protein sequence, read N- to C-terminus: Shikimate dehydrogenase (NADP(+)) (268 aa).

Residues 13 to 15 and Thr60 each bind shikimate; that span reads SLS. Lys64 (proton acceptor) is an active-site residue. Glu76 contacts NADP(+). The shikimate site is built by Asn85 and Asp100. Residues 124–128, 148–153, and Ile209 each bind NADP(+); these read GAGGA and NRTMAR. Residue Tyr211 participates in shikimate binding. Gly232 contributes to the NADP(+) binding site.

It belongs to the shikimate dehydrogenase family. As to quaternary structure, homodimer.

It catalyses the reaction shikimate + NADP(+) = 3-dehydroshikimate + NADPH + H(+). It participates in metabolic intermediate biosynthesis; chorismate biosynthesis; chorismate from D-erythrose 4-phosphate and phosphoenolpyruvate: step 4/7. Involved in the biosynthesis of the chorismate, which leads to the biosynthesis of aromatic amino acids. Catalyzes the reversible NADPH linked reduction of 3-dehydroshikimate (DHSA) to yield shikimate (SA). This is Shikimate dehydrogenase (NADP(+)) from Staphylococcus aureus (strain USA300).